Here is a 312-residue protein sequence, read N- to C-terminus: Acetaldehyde dehydrogenase (312 aa).

12 to 15 serves as a coordination point for NAD(+); it reads SGNI. The Acyl-thioester intermediate role is filled by C132. Residues 163–171 and N290 contribute to the NAD(+) site; that span reads SAGPGTRAN.

This sequence belongs to the acetaldehyde dehydrogenase family. As to quaternary structure, heterotetramer composed of two DmpG (aldolase) and two DmpF (dehydrogenase) subunits, which allows a direct channeling of acetaldehyde between the two active sites.

It carries out the reaction acetaldehyde + NAD(+) + CoA = acetyl-CoA + NADH + H(+). Its pathway is aromatic compound metabolism; phenol degradation. Is not activated by Mn(2+), Mg(2+), Ca(2+), Zn(2+) or Co(2+). Catalyzes the conversion of acetaldehyde to acetyl-CoA, using NAD(+) and coenzyme A. Can also act on propanal and butanal to form propanoyl-CoA and butanoyl-CoA, respectively. Is the final enzyme in the meta-cleavage pathway for the degradation of aromatic compounds such as phenols, cresols and catechols. NADP(+) can replace NAD(+) but the rate of reaction is much slower. The polypeptide is Acetaldehyde dehydrogenase (dmpF) (Pseudomonas sp. (strain CF600)).